Reading from the N-terminus, the 450-residue chain is Tubulin alpha-2 chain (450 aa).

Q11 is a binding site for GTP. K40 carries the N6-acetyllysine modification. GTP contacts are provided by E71, G144, T145, T179, N206, and N228. A Mg(2+)-binding site is contributed by E71. Residue E254 is part of the active site.

It belongs to the tubulin family. In terms of assembly, dimer of alpha and beta chains. A typical microtubule is a hollow water-filled tube with an outer diameter of 25 nm and an inner diameter of 15 nM. Alpha-beta heterodimers associate head-to-tail to form protofilaments running lengthwise along the microtubule wall with the beta-tubulin subunit facing the microtubule plus end conferring a structural polarity. Microtubules usually have 13 protofilaments but different protofilament numbers can be found in some organisms and specialized cells. Requires Mg(2+) as cofactor. In terms of processing, undergoes a tyrosination/detyrosination cycle, the cyclic removal and re-addition of a C-terminal tyrosine residue by the enzymes tubulin tyrosine carboxypeptidase (TTCP) and tubulin tyrosine ligase (TTL), respectively. Post-translationally, acetylation of alpha chains at Lys-40 stabilizes microtubules and affects affinity and processivity of microtubule motors. This modification has a role in multiple cellular functions, ranging from cell motility, cell cycle progression or cell differentiation to intracellular trafficking and signaling.

The protein localises to the cytoplasm. It is found in the cytoskeleton. The enzyme catalyses GTP + H2O = GDP + phosphate + H(+). In terms of biological role, tubulin is the major constituent of microtubules, a cylinder consisting of laterally associated linear protofilaments composed of alpha- and beta-tubulin heterodimers. Microtubules grow by the addition of GTP-tubulin dimers to the microtubule end, where a stabilizing cap forms. Below the cap, tubulin dimers are in GDP-bound state, owing to GTPase activity of alpha-tubulin. The protein is Tubulin alpha-2 chain of Gossypium hirsutum (Upland cotton).